We begin with the raw amino-acid sequence, 104 residues long: Ribonuclease P protein component 4 (104 aa).

The Zn(2+) site is built by C57, C60, C83, and C86.

This sequence belongs to the eukaryotic/archaeal RNase P protein component 4 family. As to quaternary structure, consists of a catalytic RNA component and at least 4-5 protein subunits. Requires Zn(2+) as cofactor.

It localises to the cytoplasm. It catalyses the reaction Endonucleolytic cleavage of RNA, removing 5'-extranucleotides from tRNA precursor.. In terms of biological role, part of ribonuclease P, a protein complex that generates mature tRNA molecules by cleaving their 5'-ends. This chain is Ribonuclease P protein component 4, found in Saccharolobus islandicus (strain L.S.2.15 / Lassen #1) (Sulfolobus islandicus).